The primary structure comprises 474 residues: Aspartate ammonia-lyase (474 aa).

L-aspartate is bound by residues Thr-105, Ser-144, Thr-145, Asn-146, and Thr-191. The segment at 322-331 (GSSIMPGKVN) is SS loop. Ser-323 serves as the catalytic Proton acceptor. L-aspartate-binding residues include Ser-324 and Lys-329.

The protein belongs to the class-II fumarase/aspartase family. Aspartase subfamily. In terms of assembly, homotetramer.

The catalysed reaction is L-aspartate = fumarate + NH4(+). In terms of biological role, lyase involved in the degradation of canavanine, the delta-oxa-analog of arginine, allowing growth on canavanine as sole nitrogen and carbon source. Probably catalyzes the conversion of L-aspartate to fumarate and ammonia. The sequence is that of Aspartate ammonia-lyase from Pseudomonas canavaninivorans.